We begin with the raw amino-acid sequence, 414 residues long: Mu-like prophage FluMu F protein (414 aa).

This sequence to phage Mu protein F.

Its function is as follows. Involved in virion morphogenesis. The polypeptide is Mu-like prophage FluMu F protein (Haemophilus influenzae (strain ATCC 51907 / DSM 11121 / KW20 / Rd)).